A 48-amino-acid chain; its full sequence is Large ribosomal subunit protein bL34c (48 aa).

The protein belongs to the bacterial ribosomal protein bL34 family.

The protein resides in the plastid. Its subcellular location is the chloroplast. This Thalassiosira pseudonana (Marine diatom) protein is Large ribosomal subunit protein bL34c.